The sequence spans 58 residues: Large ribosomal subunit protein bL32 (58 aa).

Disordered stretches follow at residues 1–22 (MAVP…HWKR) and 39–58 (LSGR…DDEE).

This sequence belongs to the bacterial ribosomal protein bL32 family.

In Crocosphaera subtropica (strain ATCC 51142 / BH68) (Cyanothece sp. (strain ATCC 51142)), this protein is Large ribosomal subunit protein bL32.